A 511-amino-acid polypeptide reads, in one-letter code: ATP synthase subunit alpha, plastid (511 aa).

170–177 (GDRQTGKT) lines the ATP pocket.

It belongs to the ATPase alpha/beta chains family. F-type ATPases have 2 components, CF(1) - the catalytic core - and CF(0) - the membrane proton channel. CF(1) has five subunits: alpha(3), beta(3), gamma(1), delta(1), epsilon(1). CF(0) has four main subunits: a, b, b' and c.

Its subcellular location is the plastid membrane. The enzyme catalyses ATP + H2O + 4 H(+)(in) = ADP + phosphate + 5 H(+)(out). Functionally, produces ATP from ADP in the presence of a proton gradient across the membrane. The alpha chain is a regulatory subunit. The polypeptide is ATP synthase subunit alpha, plastid (Cuscuta reflexa (Southern Asian dodder)).